The sequence spans 1001 residues: MIFPVARYALRWLRRPEDRAFSRAAMEMALRGVRKVLCVAEKNDAAKGIADLLSNGRMRRREGLSKFNKIYEFDYHLYGQNVTMVMTSVSGHLLAHDFQMQFRKWQSCNPLVLFEAEIEKYCPENFVDIKKTLERETRQCQALVIWTDCDREGENIGFEIIHVCKAVKPNLQVLRARFSEITPHAVRTACENLTEPDQRVSDAVDVRQELDLRIGAAFTRFQTLRLQRIFPEVLAEQLISYGSCQFPTLGFVVERFKAIQAFVPEIFHRIKVTHDHKDGIVEFNWKRHRLFNHTACLVLYQLCVEDPMATVVEVRSKPKSKWRPQALDTVELEKLASRKLRINAKETMRIAEKLYTQGYISYPRTETNIFPRDLNLTVLVEQQTPDPRWGAFAQSILERGGPTPRNGNKSDQAHPPIHPTKYTNNLQGDEQRLYEFIVRHFLACCSQDAQGQETTVEIDIAQERFVAHGLMILARNYLDVYPYDHWSDKILPVYEQGSHFQPSTVEMVDGETSPPKLLTEADLIALMEKHGIGTDATHAEHIETIKARMYVGLTPDKRFLPGHLGMGLVEGYDSMGYEMSKPDLRAELEADLKLICDGKKDKFVVLRQQVQKYKQVFIEAVAKAKKLDEALAQYFGNGTELAQQEDIYPAMPEPIRKCPQCNKDMVLKTKKNGGFYLSCMGFPECRSAVWLPDSVLEASRDSSVCPVCQPHPVYRLKLKFKRGSLPPTMPLEFVCCIGGCDDTLREILDLRFSGGPPRASQPSGRLQANQSLNRMDNSQHPQPADSRQTGSSKALAQTLPPPTAAGESNSVTCNCGQEAVLLTVRKEGPNRGRQFFKCNGGSCNFFLWADSPNPGAGGPPALAYRPLGASLGCPPGPGIHLGGFGNPGDGSGSGTSCLCSQPSVTRTVQKDGPNKGRQFHTCAKPREQQCGFFQWVDENTAPGTSGAPSWTGDRGRTLESEARSKRPRASSSDMGSTAKKPRKCSLCHQPGHTRPFCPQNR.

Residues 35–179 enclose the Toprim domain; it reads KVLCVAEKND…NLQVLRARFS (145 aa). Residues 197-617 enclose the Topo IA-type catalytic domain; sequence DQRVSDAVDV…QQVQKYKQVF (421 aa). Residue tyrosine 362 is the O-(5'-phospho-DNA)-tyrosine intermediate of the active site. Positions 400–424 are disordered; the sequence is GGPTPRNGNKSDQAHPPIHPTKYTN. The segment at 658–685 adopts a C4-type zinc-finger fold; that stretch reads CPQCNKDMVLKTKKNGGFYLSCMGFPEC. The span at 774 to 792 shows a compositional bias: polar residues; sequence RMDNSQHPQPADSRQTGSS. Residues 774–810 are disordered; the sequence is RMDNSQHPQPADSRQTGSSKALAQTLPPPTAAGESNS. Positions 813, 815, 838, 843, 897, 899, 922, and 930 each coordinate Zn(2+). 2 GRF-type zinc fingers span residues 813–852 and 897–939; these read CNCG…ADSP and CLCS…VDEN. The tract at residues 937–1001 is disordered; the sequence is DENTAPGTSG…HTRPFCPQNR (65 aa). Residues 953-964 show a composition bias toward basic and acidic residues; it reads DRGRTLESEARS.

The protein belongs to the type IA topoisomerase family. As to quaternary structure, binds ssDNA. Interacts (via N-terminal region) with BLM; the interaction is direct. Directly interacts with RMI1. Component of the RMI complex, containing at least TOP3A, RMI1 and RMI2. The RMI complex interacts with BLM. The cofactor is Mg(2+). High expression is found in testis, heart, skeletal muscle and pancreas.

Its subcellular location is the mitochondrion matrix. It carries out the reaction ATP-independent breakage of single-stranded DNA, followed by passage and rejoining.. In terms of biological role, releases the supercoiling and torsional tension of DNA introduced during the DNA replication and transcription by transiently cleaving and rejoining one strand of the DNA duplex. Introduces a single-strand break via transesterification at a target site in duplex DNA. The scissile phosphodiester is attacked by the catalytic tyrosine of the enzyme, resulting in the formation of a DNA-(5'-phosphotyrosyl)-enzyme intermediate and the expulsion of a 3'-OH DNA strand. The free DNA strand then undergoes passage around the unbroken strand thus removing DNA supercoils. Finally, in the religation step, the DNA 3'-OH attacks the covalent intermediate to expel the active-site tyrosine and restore the DNA phosphodiester backbone. As an essential component of the RMI complex it is involved in chromosome separation and the processing of homologous recombination intermediates to limit DNA crossover formation in cells. Has DNA decatenation activity. It is required for mtDNA decatenation and segregation after completion of replication, in a process that does not require BLM, RMI1 and RMI2. The sequence is that of DNA topoisomerase 3-alpha (TOP3A) from Homo sapiens (Human).